We begin with the raw amino-acid sequence, 368 residues long: Glutamate 5-kinase (368 aa).

Residue K9 participates in ATP binding. Residues S49, D136, and N148 each contribute to the substrate site. Residues 168–169 and 210–216 contribute to the ATP site; these read TD and TGGMMTK. The PUA domain maps to 275-353; it reads AGIITIDNGA…ADIENVLGYE (79 aa).

This sequence belongs to the glutamate 5-kinase family.

The protein resides in the cytoplasm. The enzyme catalyses L-glutamate + ATP = L-glutamyl 5-phosphate + ADP. It participates in amino-acid biosynthesis; L-proline biosynthesis; L-glutamate 5-semialdehyde from L-glutamate: step 1/2. Catalyzes the transfer of a phosphate group to glutamate to form L-glutamate 5-phosphate. The protein is Glutamate 5-kinase of Haemophilus influenzae (strain ATCC 51907 / DSM 11121 / KW20 / Rd).